A 137-amino-acid polypeptide reads, in one-letter code: Acidic phospholipase A2 VP8 (137 aa).

A signal peptide spans 1–16 (MRILWIVAVCLIGVEG). 7 disulfides stabilise this stretch: cysteine 41–cysteine 130, cysteine 43–cysteine 59, cysteine 58–cysteine 110, cysteine 64–cysteine 137, cysteine 65–cysteine 103, cysteine 72–cysteine 96, and cysteine 90–cysteine 101. Residues tyrosine 42, glycine 44, and glycine 46 each coordinate Ca(2+). Histidine 62 is an active-site residue. Ca(2+) is bound at residue aspartate 63. Aspartate 104 is a catalytic residue.

This sequence belongs to the phospholipase A2 family. Group II subfamily. D49 sub-subfamily. In terms of assembly, does not form a complex. It depends on Ca(2+) as a cofactor. In terms of tissue distribution, expressed by the venom gland.

Its subcellular location is the secreted. The catalysed reaction is a 1,2-diacyl-sn-glycero-3-phosphocholine + H2O = a 1-acyl-sn-glycero-3-phosphocholine + a fatty acid + H(+). Functionally, snake venom phospholipase A2 (PLA2) that is not toxic by itself, but the synergistical mixture of a basic and this acidic protein is lethal. PLA2 catalyzes the calcium-dependent hydrolysis of the 2-acyl groups in 3-sn-phosphoglycerides. This chain is Acidic phospholipase A2 VP8, found in Daboia palaestinae (Palestine viper).